The sequence spans 223 residues: Endonuclease NucS (223 aa).

It belongs to the NucS endonuclease family.

The protein localises to the cytoplasm. Its function is as follows. Cleaves both 3' and 5' ssDNA extremities of branched DNA structures. In Mycobacterium marinum (strain ATCC BAA-535 / M), this protein is Endonuclease NucS.